The following is a 340-amino-acid chain: Glycerol-3-phosphate dehydrogenase [NAD(P)+] (340 aa).

S11, W12, R33, and K106 together coordinate NADPH. 3 residues coordinate sn-glycerol 3-phosphate: K106, G137, and S139. A141 contacts NADPH. 5 residues coordinate sn-glycerol 3-phosphate: K192, D245, S255, R256, and N257. The active-site Proton acceptor is K192. R256 contributes to the NADPH binding site. Residues V280 and E282 each contribute to the NADPH site.

This sequence belongs to the NAD-dependent glycerol-3-phosphate dehydrogenase family.

It localises to the cytoplasm. It carries out the reaction sn-glycerol 3-phosphate + NAD(+) = dihydroxyacetone phosphate + NADH + H(+). The catalysed reaction is sn-glycerol 3-phosphate + NADP(+) = dihydroxyacetone phosphate + NADPH + H(+). Its pathway is membrane lipid metabolism; glycerophospholipid metabolism. Its function is as follows. Catalyzes the reduction of the glycolytic intermediate dihydroxyacetone phosphate (DHAP) to sn-glycerol 3-phosphate (G3P), the key precursor for phospholipid synthesis. The chain is Glycerol-3-phosphate dehydrogenase [NAD(P)+] from Bacillus cereus (strain 03BB102).